Here is a 339-residue protein sequence, read N- to C-terminus: Transcription initiation factor IIB (339 aa).

Residues 39 to 70 (EELICPVCGSKSIIKDYERAEIVCEMCGCVLQ) form a TFIIB-type zinc finger. Zn(2+) is bound by residues cysteine 43, cysteine 46, cysteine 62, and cysteine 65. 2 consecutive repeat copies span residues 156–239 (SELD…SREL) and 250–331 (DYVP…ELTE).

This sequence belongs to the TFIIB family.

Functionally, stabilizes TBP binding to an archaeal box-A promoter. Also responsible for recruiting RNA polymerase II to the pre-initiation complex (DNA-TBP-TFIIB). The protein is Transcription initiation factor IIB of Methanococcus maripaludis (strain DSM 14266 / JCM 13030 / NBRC 101832 / S2 / LL).